Consider the following 36-residue polypeptide: Photosystem II reaction center protein Y (36 aa).

At 1–4 the chain is on the lumenal side; it reads MDTR. The helical transmembrane segment at 5–23 threads the bilayer; that stretch reads LIVIAAPVLVAASWALFNI. Over 24–36 the chain is Stromal; sequence GRLAIQQIQRLKR.

Belongs to the PsbY family. As to quaternary structure, PSII is composed of 1 copy each of membrane proteins PsbA, PsbB, PsbC, PsbD, PsbE, PsbF, PsbH, PsbI, PsbJ, PsbK, PsbL, PsbM, PsbT, PsbX, PsbY, PsbZ, Psb30/Ycf12, at least 3 peripheral proteins of the oxygen-evolving complex and a large number of cofactors. It forms dimeric complexes.

The protein localises to the plastid. The protein resides in the chloroplast thylakoid membrane. In terms of biological role, loosely associated component of the core of photosystem II (PSII), it is not always seen in crystals. PSII is a light-driven water plastoquinone oxidoreductase, using light energy to abstract electrons from H(2)O, generating a proton gradient subsequently used for ATP formation. The protein is Photosystem II reaction center protein Y of Phaeodactylum tricornutum (strain CCAP 1055/1).